The following is a 388-amino-acid chain: S-adenosylmethionine synthase (388 aa).

An ATP-binding site is contributed by His-16. Asp-18 lines the Mg(2+) pocket. Glu-44 is a binding site for K(+). The L-methionine site is built by Glu-57 and Gln-100. The tract at residues 100–110 is flexible loop; that stretch reads QSPEIAQGVDR. ATP contacts are provided by residues 165–167, 231–232, Asp-240, 246–247, Ala-263, and Lys-267; these read DAK, KF, and RK. Asp-240 lines the L-methionine pocket. Lys-271 contributes to the L-methionine binding site.

This sequence belongs to the AdoMet synthase family. Homotetramer; dimer of dimers. It depends on Mg(2+) as a cofactor. Requires K(+) as cofactor.

It localises to the cytoplasm. It carries out the reaction L-methionine + ATP + H2O = S-adenosyl-L-methionine + phosphate + diphosphate. Its pathway is amino-acid biosynthesis; S-adenosyl-L-methionine biosynthesis; S-adenosyl-L-methionine from L-methionine: step 1/1. In terms of biological role, catalyzes the formation of S-adenosylmethionine (AdoMet) from methionine and ATP. The overall synthetic reaction is composed of two sequential steps, AdoMet formation and the subsequent tripolyphosphate hydrolysis which occurs prior to release of AdoMet from the enzyme. The polypeptide is S-adenosylmethionine synthase (Psychrobacter sp. (strain PRwf-1)).